The sequence spans 341 residues: Putative casein kinase I C03C10.2 (341 aa).

The 277-residue stretch at 50-326 folds into the Protein kinase domain; that stretch reads WSIEGVIGNG…KCLYSPKSLL (277 aa). Residues 56–64 and Lys79 contribute to the ATP site; that span reads IGNGGYGQI. The active-site Proton acceptor is Asp173.

This sequence belongs to the protein kinase superfamily. CK1 Ser/Thr protein kinase family. Casein kinase I subfamily.

It carries out the reaction L-seryl-[protein] + ATP = O-phospho-L-seryl-[protein] + ADP + H(+). The enzyme catalyses L-threonyl-[protein] + ATP = O-phospho-L-threonyl-[protein] + ADP + H(+). This Caenorhabditis elegans protein is Putative casein kinase I C03C10.2.